A 489-amino-acid polypeptide reads, in one-letter code: 5'-AMP-activated protein kinase subunit gamma-3 (489 aa).

The segment at 1–95 (MEPELEHTLP…TRQEATFPKA (95 aa)) is disordered. The span at 32 to 47 (GENSWPSPAVATSSER) shows a compositional bias: polar residues. 3 CBS domains span residues 197-258 (MATS…RSPL), 280-340 (CFKP…LLPR), and 355-415 (TFRD…HLDM). Residues Arg225, 240 to 245 (MLTITD), Val285, 306 to 307 (HR), and Lys325 contribute to the ADP site. Residues Arg225, 240-245 (MLTITD), Val285, His306, 306-307 (HR), Lys325, Thr355, Ala360, 381-382 (SA), 397-400 (SRFD), Arg424, Leu432, His453, 453-454 (HR), and 469-472 (SLSD) each bind AMP. ATP is bound by residues Arg225, 240 to 245 (MLTITD), Val285, 306 to 307 (HR), Arg307, and Lys325. The AMPK pseudosubstrate motif lies at 293–314 (LFEAVYALIKNRIHRLPVLDPV). Residues 397–400 (SRFD), Arg424, Leu432, and 453–454 (HR) each bind ADP. Residues 397–400 (SRFD), Arg424, Leu432, and 453–454 (HR) contribute to the ATP site. In terms of domain architecture, CBS 4 spans 427-486 (CLEGVLSCQPHESLGEVIDRIAREQVHRLVLVDETQHLLGVVSLSDILQALVLSPAGIDA).

It belongs to the 5'-AMP-activated protein kinase gamma subunit family. In terms of assembly, AMPK is a heterotrimer of an alpha catalytic subunit (PRKAA1 or PRKAA2), a beta (PRKAB1 or PRKAB2) and a gamma non-catalytic subunits (PRKAG1, PRKAG2 or PRKAG3). Interacts with FNIP1 and FNIP2. Phosphorylated by ULK1; leading to negatively regulate AMPK activity and suggesting the existence of a regulatory feedback loop between ULK1 and AMPK. In terms of processing, glycosylated; O-GlcNAcylated by OGT, promoting the AMP-activated protein kinase (AMPK) activity.

Functionally, AMP/ATP-binding subunit of AMP-activated protein kinase (AMPK), an energy sensor protein kinase that plays a key role in regulating cellular energy metabolism. In response to reduction of intracellular ATP levels, AMPK activates energy-producing pathways and inhibits energy-consuming processes: inhibits protein, carbohydrate and lipid biosynthesis, as well as cell growth and proliferation. AMPK acts via direct phosphorylation of metabolic enzymes, and by longer-term effects via phosphorylation of transcription regulators. AMPK also acts as a regulator of cellular polarity by remodeling the actin cytoskeleton; probably by indirectly activating myosin. The AMPK gamma3 subunit is a non-catalytic subunit with a regulatory role in muscle energy metabolism. It mediates binding to AMP, ADP and ATP, leading to AMPK activation or inhibition: AMP-binding results in allosteric activation of alpha catalytic subunit (PRKAA1 or PRKAA2) both by inducing phosphorylation and preventing dephosphorylation of catalytic subunits. ADP also stimulates phosphorylation, without stimulating already phosphorylated catalytic subunit. ATP promotes dephosphorylation of catalytic subunit, rendering the AMPK enzyme inactive. This chain is 5'-AMP-activated protein kinase subunit gamma-3 (Prkag3), found in Mus musculus (Mouse).